A 330-amino-acid polypeptide reads, in one-letter code: Flotillin-like protein FloA (330 aa).

2 helical membrane-spanning segments follow: residues 5–25 (FLPL…FYYV) and 27–47 (FLLW…QLFL).

This sequence belongs to the flotillin-like FloA family. As to quaternary structure, homooligomerizes.

It is found in the cell membrane. It localises to the membrane raft. Found in functional membrane microdomains (FMM) that may be equivalent to eukaryotic membrane rafts. FMMs are highly dynamic and increase in number as cells age. Flotillins are thought to be important factors in membrane fluidity. In Parabacteroides distasonis (strain ATCC 8503 / DSM 20701 / CIP 104284 / JCM 5825 / NCTC 11152), this protein is Flotillin-like protein FloA.